The following is a 292-amino-acid chain: Ribosomal protein L11 methyltransferase (292 aa).

4 residues coordinate S-adenosyl-L-methionine: T144, G165, D187, and N229.

It belongs to the methyltransferase superfamily. PrmA family.

Its subcellular location is the cytoplasm. The catalysed reaction is L-lysyl-[protein] + 3 S-adenosyl-L-methionine = N(6),N(6),N(6)-trimethyl-L-lysyl-[protein] + 3 S-adenosyl-L-homocysteine + 3 H(+). Methylates ribosomal protein L11. This is Ribosomal protein L11 methyltransferase from Ectopseudomonas mendocina (strain ymp) (Pseudomonas mendocina).